A 239-amino-acid chain; its full sequence is Large ribosomal subunit protein uL1 (239 aa).

It belongs to the universal ribosomal protein uL1 family. As to quaternary structure, part of the 50S ribosomal subunit.

In terms of biological role, binds directly to 23S rRNA. The L1 stalk is quite mobile in the ribosome, and is involved in E site tRNA release. Protein L1 is also a translational repressor protein, it controls the translation of the L11 operon by binding to its mRNA. This is Large ribosomal subunit protein uL1 from Rickettsia rickettsii (strain Iowa).